A 207-amino-acid polypeptide reads, in one-letter code: A-type ATP synthase subunit E (207 aa).

This sequence belongs to the V-ATPase E subunit family. In terms of assembly, has multiple subunits with at least A(3), B(3), C, D, E, F, H, I and proteolipid K(x).

It is found in the cell membrane. Functionally, component of the A-type ATP synthase that produces ATP from ADP in the presence of a proton gradient across the membrane. The protein is A-type ATP synthase subunit E of Methanosphaera stadtmanae (strain ATCC 43021 / DSM 3091 / JCM 11832 / MCB-3).